A 948-amino-acid chain; its full sequence is Non-lysosomal glucosylceramidase (948 aa).

At 1 to 736 the chain is on the extracellular side; sequence MAEPLAVETK…VMDGPSAYCS (736 aa). Residues 177 to 195 are compositionally biased toward basic and acidic residues; sequence STRDKTSDPDGDPDGERTK. Positions 177 to 197 are disordered; it reads STRDKTSDPDGDPDGERTKCQ. Asn-200 carries an N-linked (GlcNAc...) asparagine glycan. Position 214 is a phosphoserine (Ser-214). N-linked (GlcNAc...) asparagine glycans are attached at residues Asn-288, Asn-555, and Asn-629. Residues Ser-667 and Ser-669 each carry the phosphoserine modification. Asn-673 is a glycosylation site (N-linked (GlcNAc...) asparagine). A helical transmembrane segment spans residues 737-753; the sequence is GLWLAALQAMSAMATIL. Residues 754–948 are Cytoplasmic-facing; the sequence is DQPNDCLRYQ…ALERRRAQRD (195 aa).

It belongs to the non-lysosomal glucosylceramidase family.

It localises to the cell membrane. The enzyme catalyses a beta-D-glucosyl-(1&lt;-&gt;1')-N-acylsphing-4-enine + H2O = an N-acylsphing-4-enine + D-glucose. Non-lysosomal glucosylceramidase that catalyzes the conversion of glucosylceramide to free glucose and ceramide. This Drosophila melanogaster (Fruit fly) protein is Non-lysosomal glucosylceramidase.